Consider the following 216-residue polypeptide: Cyclin-U4-2 (216 aa).

This sequence belongs to the cyclin family. Cyclin U/P subfamily. Interacts with CDKA-1. In terms of tissue distribution, expressed in roots, stems and flowers. Expressed in the shoot apex, leaf primordia and young leaves.

The polypeptide is Cyclin-U4-2 (CYCU4-2) (Arabidopsis thaliana (Mouse-ear cress)).